The following is a 188-amino-acid chain: Glutamyl endopeptidase 2 (188 aa).

Cysteine 14 and cysteine 34 are disulfide-bonded. Residues histidine 33, aspartate 62, and serine 143 each act as charge relay system in the active site. Cysteine 137 and cysteine 163 form a disulfide bridge.

Belongs to the peptidase S1 family. Monomer.

The enzyme catalyses Preferential cleavage: -Glu-|-Xaa- &gt;&gt; -Asp-|-Xaa-. Preference for Pro or Leu at P2 and Phe at P3. Cleavage of -Glu-|-Asp- and -Glu-|-Pro- bonds is slow.. Preferentially cleaves peptide bonds on the carboxyl-terminal side of glutamate. The polypeptide is Glutamyl endopeptidase 2 (sprE) (Streptomyces griseus).